The following is a 232-amino-acid chain: 2-C-methyl-D-erythritol 4-phosphate cytidylyltransferase (232 aa).

It belongs to the IspD/TarI cytidylyltransferase family. IspD subfamily.

It carries out the reaction 2-C-methyl-D-erythritol 4-phosphate + CTP + H(+) = 4-CDP-2-C-methyl-D-erythritol + diphosphate. It functions in the pathway isoprenoid biosynthesis; isopentenyl diphosphate biosynthesis via DXP pathway; isopentenyl diphosphate from 1-deoxy-D-xylulose 5-phosphate: step 2/6. Catalyzes the formation of 4-diphosphocytidyl-2-C-methyl-D-erythritol from CTP and 2-C-methyl-D-erythritol 4-phosphate (MEP). This chain is 2-C-methyl-D-erythritol 4-phosphate cytidylyltransferase, found in Nitrosospira multiformis (strain ATCC 25196 / NCIMB 11849 / C 71).